The following is a 527-amino-acid chain: Acid-sensing ion channel 1 (527 aa).

The Cytoplasmic portion of the chain corresponds to 1–49 (MMDLKVDEEEVDSGQPVSIQAFASSSTLHGISHIFSYERLSLKRVVWAL). A helical transmembrane segment spans residues 50–71 (CFMGSLALLALVCTNRIQYYFL). Residues 72–424 (YPHVTKLDEV…NYETIEQKKA (353 aa)) lie on the Extracellular side of the membrane. 7 cysteine pairs are disulfide-bonded: C94–C195, C173–C180, C291–C366, C309–C362, C313–C360, C322–C344, and C324–C336. N-linked (GlcNAc...) asparagine glycosylation is found at N367 and N394. A discontinuously helical transmembrane segment spans residues 425-454 (YEVAGLLGDIGGQMGLFIGASILTVLELFD). Residues 443–445 (GAS) carry the GAS motif; ion selectivity filter motif. At 455–527 (YAYEVIKHRL…ARGTFEDFTC (73 aa)) the chain is on the cytoplasmic side.

It belongs to the amiloride-sensitive sodium channel (TC 1.A.6) family. ASIC1 subfamily. In terms of assembly, homotrimer. Heterotrimer; with other ASIC proteins producing channel with different properties.

It is found in the cell membrane. The protein resides in the postsynaptic cell membrane. Its subcellular location is the cell projection. The protein localises to the dendrite. It carries out the reaction Na(+)(in) = Na(+)(out). It catalyses the reaction Li(+)(in) = Li(+)(out). The catalysed reaction is K(+)(in) = K(+)(out). The enzyme catalyses Ca(2+)(in) = Ca(2+)(out). Inhibited by the diuretic drug amiloride. Inhibited by Cs(1+) ions. Inhibited by the spider venom psalmotoxin-1; this locks the channel into its desensitized conformation. Channel activity is increased by the heterodimeric snake venom neurotoxin composed of MitTx-alpha and MitTx-beta; this slows channel closure and increases the magnitude of the steady-state current that is triggered by low pH. In terms of biological role, forms voltage-independent, pH-gated trimeric sodium channels that act as postsynaptic excitatory receptors in the nervous system, playing a crucial role in regulating synaptic plasticity, learning, and memory. Upon extracellular pH drop this channel elicits transient, fast activating, and completely desensitizing inward currents. Displays high selectivity for sodium ions but can also permit the permeation of other cations. Regulates more or less directly intracellular calcium concentration and CaMKII phosphorylation, and thereby the density of dendritic spines. Modulates neuronal activity in the circuits underlying innate fear. The sequence is that of Acid-sensing ion channel 1 from Gallus gallus (Chicken).